The sequence spans 286 residues: Movement protein (286 aa).

The protein belongs to the tenuiviruses pc4 protein family. In terms of assembly, interacts with the rice proteins DJA6 and HSP17.9A.

It is found in the host cytoplasm. Transports viral genome to neighboring plant cells directly through plasmosdesmata, without any budding. The movement protein allows efficient cell to cell propagation, by bypassing the host cell wall barrier. The protein is Movement protein of Avena sativa (Oat).